Here is a 187-residue protein sequence, read N- to C-terminus: Ribosome-recycling factor (187 aa).

Belongs to the RRF family.

The protein resides in the cytoplasm. Responsible for the release of ribosomes from messenger RNA at the termination of protein biosynthesis. May increase the efficiency of translation by recycling ribosomes from one round of translation to another. This chain is Ribosome-recycling factor, found in Methylorubrum populi (strain ATCC BAA-705 / NCIMB 13946 / BJ001) (Methylobacterium populi).